The following is a 199-amino-acid chain: ATP-dependent Clp protease proteolytic subunit (199 aa).

Ser98 (nucleophile) is an active-site residue. His123 is a catalytic residue.

The protein belongs to the peptidase S14 family. As to quaternary structure, fourteen ClpP subunits assemble into 2 heptameric rings which stack back to back to give a disk-like structure with a central cavity, resembling the structure of eukaryotic proteasomes.

It localises to the cytoplasm. The catalysed reaction is Hydrolysis of proteins to small peptides in the presence of ATP and magnesium. alpha-casein is the usual test substrate. In the absence of ATP, only oligopeptides shorter than five residues are hydrolyzed (such as succinyl-Leu-Tyr-|-NHMec, and Leu-Tyr-Leu-|-Tyr-Trp, in which cleavage of the -Tyr-|-Leu- and -Tyr-|-Trp bonds also occurs).. Cleaves peptides in various proteins in a process that requires ATP hydrolysis. Has a chymotrypsin-like activity. Plays a major role in the degradation of misfolded proteins. The polypeptide is ATP-dependent Clp protease proteolytic subunit (Clostridium botulinum (strain Eklund 17B / Type B)).